The chain runs to 364 residues: UDP-3-O-acylglucosamine N-acyltransferase (364 aa).

Histidine 257 serves as the catalytic Proton acceptor.

The protein belongs to the transferase hexapeptide repeat family. LpxD subfamily. Homotrimer.

It carries out the reaction a UDP-3-O-[(3R)-3-hydroxyacyl]-alpha-D-glucosamine + a (3R)-hydroxyacyl-[ACP] = a UDP-2-N,3-O-bis[(3R)-3-hydroxyacyl]-alpha-D-glucosamine + holo-[ACP] + H(+). It functions in the pathway bacterial outer membrane biogenesis; LPS lipid A biosynthesis. Its function is as follows. Catalyzes the N-acylation of UDP-3-O-acylglucosamine using 3-hydroxyacyl-ACP as the acyl donor. Is involved in the biosynthesis of lipid A, a phosphorylated glycolipid that anchors the lipopolysaccharide to the outer membrane of the cell. The sequence is that of UDP-3-O-acylglucosamine N-acyltransferase from Paracoccus denitrificans (strain Pd 1222).